A 1276-amino-acid polypeptide reads, in one-letter code: Histone-lysine N-methyltransferase PRDM16 (1276 aa).

The span at M1–L10 shows a compositional bias: basic residues. Residues M1–Y68 are disordered. An SET domain is found at A82–K211. The segment at F230–C253 adopts a C2H2-type 1; atypical zinc-finger fold. 5 C2H2-type zinc fingers span residues H281–H303, Y309–H331, F337–H360, H366–H388, and F394–H416. Residues I423 to C445 form a C2H2-type 7; atypical zinc finger. Disordered stretches follow at residues S533 to G657 and P772 to D804. Over residues A561–T570 the composition is skewed to polar residues. Over residues P575–D597 the composition is skewed to basic and acidic residues. The span at T609–D624 shows a compositional bias: low complexity. The span at D632–S642 shows a compositional bias: basic and acidic residues. The interval D679–S1038 is interaction with CTBP1, CTBP2 and ZNF516. The tract at residues P739–L1276 is mediates interaction with SKI and regulation of TGF-beta signaling. 3 C2H2-type zinc fingers span residues Y951–H973, Y979–H1002, and F1008–H1032. 2 disordered regions span residues E1033–L1065 and A1105–A1163. Polar residues predominate over residues H1047–E1058. Acidic residues predominate over residues E1116–S1133.

It belongs to the PRDM16 family. As to quaternary structure, interacts with CEBPA, CEBPB and CEBPD; the interaction is direct. Interacts with PPARG and PPARA; controls brown adipocytes differentiation. Interacts with CTBP1 and CTBP2; represses the expression of WAT-specific genes. Interacts with PPARGC1A and PPARGC1B; interaction with PPARGC1A or PPARGC1B activates the transcription of BAT-specific gene. Interacts with HDAC1, SKI, SMAD2 and SMAD3; the interaction with SKI promotes the recruitment of SMAD3-HDAC1 complex on the promoter of TGF-beta target genes. Interacts with ZNF516; the interaction is direct and may play a role in the transcription of brown adipose tissue-specific gene. Expressed in uterus and kidney. Expressed in both cardiomyocytes and interstitial cells.

It localises to the nucleus. Its subcellular location is the cytoplasm. The catalysed reaction is L-lysyl(9)-[histone H3] + S-adenosyl-L-methionine = N(6)-methyl-L-lysyl(9)-[histone H3] + S-adenosyl-L-homocysteine + H(+). Binds DNA and functions as a transcriptional regulator. Displays histone methyltransferase activity and monomethylates 'Lys-9' of histone H3 (H3K9me1) in vitro. Probably catalyzes the monomethylation of free histone H3 in the cytoplasm which is then transported to the nucleus and incorporated into nucleosomes where SUV39H methyltransferases use it as a substrate to catalyze histone H3 'Lys-9' trimethylation. Likely to be one of the primary histone methyltransferases along with MECOM/PRDM3 that direct cytoplasmic H3K9me1 methylation. Functions in the differentiation of brown adipose tissue (BAT) which is specialized in dissipating chemical energy in the form of heat in response to cold or excess feeding while white adipose tissue (WAT) is specialized in the storage of excess energy and the control of systemic metabolism. Together with CEBPB, regulates the differentiation of myoblastic precursors into brown adipose cells. Functions as a repressor of TGF-beta signaling. Its function is as follows. Binds DNA and functions as a transcriptional regulator. Functions as a repressor of TGF-beta signaling. May regulate granulocyte differentiation. The protein is Histone-lysine N-methyltransferase PRDM16 of Homo sapiens (Human).